Reading from the N-terminus, the 79-residue chain is Sec-independent protein translocase protein TatA (79 aa).

A helical membrane pass occupies residues M1–F21. The disordered stretch occupies residues D46–S79. Residues K66–S79 show a composition bias toward basic and acidic residues.

It belongs to the TatA/E family. In terms of assembly, the Tat system comprises two distinct complexes: a TatABC complex, containing multiple copies of TatA, TatB and TatC subunits, and a separate TatA complex, containing only TatA subunits. Substrates initially bind to the TatABC complex, which probably triggers association of the separate TatA complex to form the active translocon.

The protein resides in the cell inner membrane. Its function is as follows. Part of the twin-arginine translocation (Tat) system that transports large folded proteins containing a characteristic twin-arginine motif in their signal peptide across membranes. TatA could form the protein-conducting channel of the Tat system. This chain is Sec-independent protein translocase protein TatA, found in Helicobacter pylori (strain HPAG1).